The sequence spans 334 residues: MLLIGVAGTELSAQERDWLQHDAVAGVVLFKRNFGSRSQVVELSAAIRAAAPRPVLICVDQEGGRVQRFREGFSALAPLQSFGAQYAQAPEAALAAARAHAQLMASEVRASGVDLSFAPVVDLGRGNRAIGDRAFSDDPQIVATFTRAYVQALHGAGMAATLKHFPGHGTVLEDTHVDHASDPRPLEALQAEDLVPFVAGIEAGADAVMMAHVVYPQVAPEPAGYSQRWIEQILRGQMGFRGVVFSDDIGMAASFSAGGVAGRVHAHLDAGCDVVLVCHPELVAESLQAVQGRRLNTAALIGLIGRGALGWDGLLAGTDVSFTTPHSAHFGTTA.

Residues Asp60, Arg68, Arg133, and 163–164 (KH) each bind substrate. The active-site Proton donor/acceptor is His176. The active-site Nucleophile is the Asp247.

The protein belongs to the glycosyl hydrolase 3 family. NagZ subfamily.

It localises to the cytoplasm. It carries out the reaction Hydrolysis of terminal non-reducing N-acetyl-D-hexosamine residues in N-acetyl-beta-D-hexosaminides.. The protein operates within cell wall biogenesis; peptidoglycan recycling. Its function is as follows. Plays a role in peptidoglycan recycling by cleaving the terminal beta-1,4-linked N-acetylglucosamine (GlcNAc) from peptide-linked peptidoglycan fragments, giving rise to free GlcNAc, anhydro-N-acetylmuramic acid and anhydro-N-acetylmuramic acid-linked peptides. The polypeptide is Beta-hexosaminidase (Xanthomonas oryzae pv. oryzae (strain MAFF 311018)).